A 289-amino-acid chain; its full sequence is Phosphate import ATP-binding protein PstB (289 aa).

Positions 1-37 (MRSIDRPGGQAARPTIGSVAGASNTRTRDARSLPDTP) are disordered. The 244-residue stretch at 41–284 (AAAENFSFYY…PVRRETEDYI (244 aa)) folds into the ABC transporter domain. 73-80 (GPSGCGKS) contacts ATP.

It belongs to the ABC transporter superfamily. Phosphate importer (TC 3.A.1.7) family. The complex is composed of two ATP-binding proteins (PstB), two transmembrane proteins (PstC and PstA) and a solute-binding protein (PstS).

It is found in the cell inner membrane. It catalyses the reaction phosphate(out) + ATP + H2O = ADP + 2 phosphate(in) + H(+). Functionally, part of the ABC transporter complex PstSACB involved in phosphate import. Responsible for energy coupling to the transport system. This is Phosphate import ATP-binding protein PstB from Aromatoleum aromaticum (strain DSM 19018 / LMG 30748 / EbN1) (Azoarcus sp. (strain EbN1)).